A 212-amino-acid chain; its full sequence is Kynurenine formamidase (212 aa).

Substrate is bound at residue W17. Residues H48, H52, and D54 each coordinate Zn(2+). Residue H58 is the Proton donor/acceptor of the active site. Positions 161 and 173 each coordinate Zn(2+).

It belongs to the Cyclase 1 superfamily. KynB family. As to quaternary structure, homodimer. Zn(2+) serves as cofactor.

It catalyses the reaction N-formyl-L-kynurenine + H2O = L-kynurenine + formate + H(+). Its pathway is amino-acid degradation; L-tryptophan degradation via kynurenine pathway; L-kynurenine from L-tryptophan: step 2/2. Its function is as follows. Catalyzes the hydrolysis of N-formyl-L-kynurenine to L-kynurenine, the second step in the kynurenine pathway of tryptophan degradation. In Salinibacter ruber (strain DSM 13855 / M31), this protein is Kynurenine formamidase.